The following is a 279-amino-acid chain: Dehydrogenase/reductase SDR family member 4 (279 aa).

37–61 (LVTASTDGIGLAIARRLAEDGAHVV) serves as a coordination point for NADP(+). At lysine 93 the chain carries N6-acetyllysine; alternate. An N6-succinyllysine; alternate modification is found at lysine 93. Lysine 106 is subject to N6-acetyllysine. Substrate is bound at residue serine 170. The active-site Proton acceptor is tyrosine 183. Lysine 187 provides a ligand contact to NADP(+). N6-acetyllysine; alternate is present on lysine 217. Lysine 217 is subject to N6-succinyllysine; alternate. Phosphoserine is present on serine 221. An N6-succinyllysine mark is found at lysine 228 and lysine 235. Positions 277–279 (SRL) match the Peroxisomal targeting signal motif.

This sequence belongs to the short-chain dehydrogenases/reductases (SDR) family. As to quaternary structure, homotetramer.

Its subcellular location is the peroxisome. It carries out the reaction a secondary alcohol + NADP(+) = a ketone + NADPH + H(+). The catalysed reaction is 3alpha-hydroxy-5beta-pregnan-20-one + NADP(+) = 5beta-pregnan-3,20-dione + NADPH + H(+). The enzyme catalyses 5beta-dihydrotestosterone + NADPH + H(+) = 5beta-androstane-3alpha,17beta-diol + NADP(+). It catalyses the reaction all-trans-retinol + NADP(+) = all-trans-retinal + NADPH + H(+). It carries out the reaction isatin + NADPH + H(+) = 3-hydroxyindolin-2-one + NADP(+). Functionally, NADPH-dependent oxidoreductase which catalyzes the reduction of a variety of compounds bearing carbonyl groups including ketosteroids, alpha-dicarbonyl compounds, aldehydes, aromatic ketones and quinones. Reduces all-trans-retinal and 9-cis retinal. Reduces 3-ketosteroids and benzil into 3alpha-hydroxysteroids and S-benzoin, respectively, in contrast to the stereoselectivity of primates DHRS4s which produce 3beta-hydroxysteroids and R-benzoin. In the reverse reaction, catalyzes the NADP-dependent oxidation of 3alpha-hydroxysteroids and alcohol, but with much lower efficiency. Involved in the metabolism of 3alpha-hydroxysteroids, retinoid, isatin and xenobiotic carbonyl compounds. In Rattus norvegicus (Rat), this protein is Dehydrogenase/reductase SDR family member 4 (Dhrs4).